A 493-amino-acid chain; its full sequence is Putative trans-acting regulator SP_1800 (493 aa).

It belongs to the AtxA/AcpA family.

This is Putative trans-acting regulator SP_1800 from Streptococcus pneumoniae serotype 4 (strain ATCC BAA-334 / TIGR4).